The primary structure comprises 639 residues: Protein artemis (639 aa).

3 disordered regions span residues 450–496, 515–570, and 590–617; these read MDCT…LTSS, SELE…SQVD, and EAAELKSDSQVSSDFELPPTPGSKVPQP. Over residues 454-466 the composition is skewed to acidic residues; sequence ESNDDDDDEDDAA. The span at 518-537 shows a compositional bias: polar residues; the sequence is ENSQNTQTLSTENTASQSPE. Residues 548–560 show a composition bias toward low complexity; sequence VHMSSSQSTHISD.

The protein belongs to the DNA repair metallo-beta-lactamase (DRMBL) family.

It is found in the nucleus. May have a role in the processing of DNA double strand breaks (DSBs) prior to their repair by the non homologous end joining (NHEJ) pathway. Probably exhibits both exonuclease and endonuclease activity. This Danio rerio (Zebrafish) protein is Protein artemis (dclre1c).